Reading from the N-terminus, the 540-residue chain is Phosphatidylinositol 4-phosphate 5-kinase type-1 beta (540 aa).

Residues 1-21 (MSSAAENGEAAPGKQNEEKTY) form a disordered region. The PIPK domain occupies 25 to 395 (ASSAIKGAIQ…RFLKFMNSRV (371 aa)). Phosphoserine is present on residues serine 445, serine 447, and serine 448.

In terms of assembly, interacts with RAC1, AJUBA, PLD1, PLD2 and ARF1. Detected in heart, pancreas, brain, kidney, skeletal muscle and lung.

The protein localises to the cytoplasm. The protein resides in the cytosol. It is found in the cell membrane. Its subcellular location is the endomembrane system. The enzyme catalyses a 1,2-diacyl-sn-glycero-3-phospho-(1D-myo-inositol 4-phosphate) + ATP = a 1,2-diacyl-sn-glycero-3-phospho-(1D-myo-inositol-4,5-bisphosphate) + ADP + H(+). The catalysed reaction is 1-octadecanoyl-2-(5Z,8Z,11Z,14Z)-eicosatetraenoyl-sn-glycero-3-phospho-1D-myo-inositol 4-phosphate + ATP = 1-octadecanoyl-2-(5Z,8Z,11Z,14Z)-eicosatetraenoyl-sn-glycero-3-phospho-1D-myo-inositol 4,5-bisphosphate + ADP + H(+). It carries out the reaction 1-octadecanoyl-2-(9Z)-octadecenoyl-sn-glycero-3-phospho-1D-myo-inositol 4-phosphate + ATP = 1-octadecanoyl-2-(9Z)-octadecenoyl-sn-glycero-3-phospho-1D-myo-inositol 4,5-bisphosphate + ADP + H(+). It catalyses the reaction 1-octadecanoyl-2-(9Z)-octadecenoyl-sn-glycero-3-phospho-1D-myo-inositol + ATP = 1-octadecanoyl-2-(9Z)-octadecenoyl-sn-glycero-3-phospho-1D-myo-inositol 5-phosphate + ADP + H(+). The enzyme catalyses 1-octadecanoyl-2-(9Z,12Z)-octadecadienoyl-sn-glycero-3-phospho-1D-myo-inositol + ATP = 1-octadecanoyl-2-(9Z,12Z)-octadecadienoyl-sn-glycero-3-phospho-1D-myo-inositol 5-phosphate + ADP + H(+). The catalysed reaction is 1-octadecanoyl-2-(5Z,8Z,11Z,14Z-eicosatetraenoyl)-sn-glycero-3-phospho-(1D-myo-inositol) + ATP = 1-octadecanoyl-2-(5Z,8Z,11Z,14Z)-eicosatetraenoyl-sn-glycero-3-phospho-1D-myo-inositol 5-phosphate + ADP + H(+). It carries out the reaction 1,2-di-(9Z,12Z)-octadecadienoyl-sn-glycero-3-phospho-1D-myo-inositol + ATP = 1,2-di(9Z,12Z)-octadecadienoyl-sn-glycero-3-phospho-1D-myo-inositol 5-phosphate + ADP + H(+). Its function is as follows. Catalyzes the phosphorylation of phosphatidylinositol 4-phosphate (PtdIns(4)P/PI4P) to form phosphatidylinositol 4,5-bisphosphate (PtdIns(4,5)P2/PIP2), a lipid second messenger that regulates several cellular processes such as signal transduction, vesicle trafficking, actin cytoskeleton dynamics, cell adhesion, and cell motility. PtdIns(4,5)P2 can directly act as a second messenger or can be utilized as a precursor to generate other second messengers: inositol 1,4,5-trisphosphate (IP3), diacylglycerol (DAG) or phosphatidylinositol-3,4,5-trisphosphate (PtdIns(3,4,5)P3/PIP3). Mediates RAC1-dependent reorganization of actin filaments. Contributes to the activation of phospholipase PLD2. Together with PIP5K1A, is required, after stimulation by G-protein coupled receptors, for the synthesis of IP3 that will induce stable platelet adhesion. The protein is Phosphatidylinositol 4-phosphate 5-kinase type-1 beta of Homo sapiens (Human).